The chain runs to 391 residues: Formate-dependent phosphoribosylglycinamide formyltransferase (391 aa).

N(1)-(5-phospho-beta-D-ribosyl)glycinamide is bound by residues 20–21 (EL) and glutamate 80. ATP contacts are provided by residues arginine 112, lysine 153, 158-163 (SSGKGQ), 193-196 (EGFI), and glutamate 201. Positions 117–306 (RLAAEELGLT…EFALHVRAFT (190 aa)) constitute an ATP-grasp domain. 2 residues coordinate Mg(2+): glutamate 265 and glutamate 277. N(1)-(5-phospho-beta-D-ribosyl)glycinamide contacts are provided by residues aspartate 284, lysine 354, and 361–362 (RR).

This sequence belongs to the PurK/PurT family. In terms of assembly, homodimer.

It carries out the reaction N(1)-(5-phospho-beta-D-ribosyl)glycinamide + formate + ATP = N(2)-formyl-N(1)-(5-phospho-beta-D-ribosyl)glycinamide + ADP + phosphate + H(+). The protein operates within purine metabolism; IMP biosynthesis via de novo pathway; N(2)-formyl-N(1)-(5-phospho-D-ribosyl)glycinamide from N(1)-(5-phospho-D-ribosyl)glycinamide (formate route): step 1/1. Functionally, involved in the de novo purine biosynthesis. Catalyzes the transfer of formate to 5-phospho-ribosyl-glycinamide (GAR), producing 5-phospho-ribosyl-N-formylglycinamide (FGAR). Formate is provided by PurU via hydrolysis of 10-formyl-tetrahydrofolate. This Vibrio vulnificus (strain CMCP6) protein is Formate-dependent phosphoribosylglycinamide formyltransferase.